The primary structure comprises 483 residues: Ankyrin repeat domain-containing protein M-T5 (483 aa).

6 ANK repeats span residues 32-63 (SRDT…DVNG), 67-101 (SRTS…DVNA), 105-137 (DGRY…SVYV), 177-210 (YGFN…DSSR), 250-279 (LDFT…DPNV), and 283-312 (LGNS…TPDA). Residues 390–478 (VSVFDTAFGL…LTDDEIHDLF (89 aa)) form a PRANC/F-box-like region.

Interacts (via PRANC/F-box-like domain) with the SKP1 component of the host SCF ubiquitin ligase complex. Interacts (via N-terminus) with host AKT1.

Functionally, substrate-specific adapter of SKP1-containing E3 ubiquitin-protein ligases which mediate the ubiquitination and subsequent proteasomal degradation of host target proteins including CDKN1B. Disappearance of host CDKN1B correlates with cell cycle progression through the G0/G1 checkpoint. Therefore, viruses in infected cells are protected from diverse innate host antiviral responses normally triggered by G0/G1 cell cycle arrest. The polypeptide is Ankyrin repeat domain-containing protein M-T5 (m005R) (Myxoma virus (strain Lausanne) (MYXV)).